The primary structure comprises 385 residues: Anhydro-N-acetylmuramic acid kinase (385 aa).

12–19 (GTSLDGID) contacts ATP.

Belongs to the anhydro-N-acetylmuramic acid kinase family.

The catalysed reaction is 1,6-anhydro-N-acetyl-beta-muramate + ATP + H2O = N-acetyl-D-muramate 6-phosphate + ADP + H(+). It functions in the pathway amino-sugar metabolism; 1,6-anhydro-N-acetylmuramate degradation. Its pathway is cell wall biogenesis; peptidoglycan recycling. In terms of biological role, catalyzes the specific phosphorylation of 1,6-anhydro-N-acetylmuramic acid (anhMurNAc) with the simultaneous cleavage of the 1,6-anhydro ring, generating MurNAc-6-P. Is required for the utilization of anhMurNAc either imported from the medium or derived from its own cell wall murein, and thus plays a role in cell wall recycling. This is Anhydro-N-acetylmuramic acid kinase from Bacillus thuringiensis (strain Al Hakam).